A 208-amino-acid polypeptide reads, in one-letter code: Methenyltetrahydrofolate cyclohydrolase (208 aa).

Residues 25 to 46 (GAAAISGAMGAALVSMVCNLTI) form a helical membrane-spanning segment.

The protein belongs to the cyclodeaminase/cyclohydrolase family. In terms of assembly, homodimer.

Its subcellular location is the membrane. It carries out the reaction (6R)-5,10-methenyltetrahydrofolate + H2O = (6R)-10-formyltetrahydrofolate + H(+). Its pathway is one-carbon metabolism; formaldehyde assimilation via serine pathway. Required for both C1 and C2 metabolism. This chain is Methenyltetrahydrofolate cyclohydrolase (fchA), found in Methylorubrum extorquens (strain ATCC 14718 / DSM 1338 / JCM 2805 / NCIMB 9133 / AM1) (Methylobacterium extorquens).